A 237-amino-acid chain; its full sequence is Uridylate kinase (237 aa).

Position 9-12 (9-12) interacts with ATP; that stretch reads KLSG. The tract at residues 17 to 22 is involved in allosteric activation by GTP; it reads GSQGYG. G51 is a UMP binding site. 2 residues coordinate ATP: G52 and R56. Residues D71 and 132–139 each bind UMP; that span reads CGNPFFTT. Residues T159, Y165, and D168 each contribute to the ATP site.

The protein belongs to the UMP kinase family. As to quaternary structure, homohexamer.

It localises to the cytoplasm. It catalyses the reaction UMP + ATP = UDP + ADP. It functions in the pathway pyrimidine metabolism; CTP biosynthesis via de novo pathway; UDP from UMP (UMPK route): step 1/1. With respect to regulation, allosterically activated by GTP. Inhibited by UTP. Its function is as follows. Catalyzes the reversible phosphorylation of UMP to UDP. The chain is Uridylate kinase from Synechococcus sp. (strain CC9902).